The following is a 235-amino-acid chain: MTFSIMRFNPETDKKPYMQDFELDVSAIQGKMLLNALEALREKHPDIGLRRSCAEGVCGSDGMNINGKNALACVTQLKDLPDRVVVRPLPGFPIIRDLIVDMEQFYAQYKKVKPYLLNDQEAPQKERLQSPEERAKLDGLYECILCACCSSSCPSYWWNPDKFIGPAGLLWSYRFIADSRDSKEKERLDAMKDPYSVFRCRTIMDCATVCPKNLNPAKAIRKIRTEMLQETESGE.

[2Fe-2S] cluster-binding residues include Cys-53, Cys-58, and Cys-73. One can recognise a 4Fe-4S ferredoxin-type domain in the interval 133–163 (ERAKLDGLYECILCACCSSSCPSYWWNPDKF). Positions 143, 146, and 149 each coordinate [4Fe-4S] cluster. [3Fe-4S] cluster is bound at residue Cys-153. Trp-158 is an a ubiquinone binding site. [3Fe-4S] cluster contacts are provided by Cys-200 and Cys-206. Cys-210 is a [4Fe-4S] cluster binding site.

Belongs to the succinate dehydrogenase/fumarate reductase iron-sulfur protein family. In terms of assembly, part of an enzyme complex containing four subunits: a flavoprotein, an iron-sulfur protein, cytochrome b-556 and a hydrophobic protein. Requires [2Fe-2S] cluster as cofactor. [3Fe-4S] cluster is required as a cofactor. The cofactor is [4Fe-4S] cluster.

The catalysed reaction is a quinone + succinate = fumarate + a quinol. Its pathway is carbohydrate metabolism; tricarboxylic acid cycle; fumarate from succinate (bacterial route): step 1/1. This Coxiella burnetii (strain RSA 493 / Nine Mile phase I) protein is Succinate dehydrogenase iron-sulfur subunit (sdhB).